We begin with the raw amino-acid sequence, 513 residues long: HMG box-containing protein 1 (513 aa).

Residues 151 to 181 (RPPPVSSAKSGPAFPHDHWKEETPVRHERAN) are disordered. The span at 165 to 181 (PHDHWKEETPVRHERAN) shows a compositional bias: basic and acidic residues. The AXH domain occupies 202-343 (WCNSWPSTVW…PPGHPDAINF (142 aa)). A DNA-binding region (HMG box) is located at residues 433-501 (CKRPMNAFML…EQKRLNPDCW (69 aa)).

Binds TCF4. Binds RB1. Binds the second PAH repeat of SIN3A. Ubiquitinated by the CTLH E3 ubiquitin-protein ligase complex, leading to subsequent proteasomal degradation. As to expression, highly expressed in liver, adipose tissue, lung, brain, spleen, kidney, skeletal muscle and heart.

The protein localises to the nucleus. In terms of biological role, transcriptional repressor that binds to the promoter region of target genes. Plays a role in the regulation of the cell cycle and of the Wnt pathway. Binds preferentially to the sequence 5'-TTCATTCATTCA-3'. Binding to the histone H1.0 promoter is enhanced by interaction with RB1. Disrupts the interaction between DNA and TCF4. The protein is HMG box-containing protein 1 (Hbp1) of Rattus norvegicus (Rat).